A 91-amino-acid polypeptide reads, in one-letter code: DNA-binding protein HRL53 (91 aa).

The disordered stretch occupies residues 57–91 (ATKGRNPSTGAEVDIPARNVPKFTPGKGLKDAVNG).

This sequence belongs to the bacterial histone-like protein family.

Histone-like DNA-binding protein which is capable of wrapping DNA to stabilize it, and thus to prevent its denaturation under extreme environmental conditions. Binds to nod promoters and induces DNA binding. In Rhizobium leguminosarum, this protein is DNA-binding protein HRL53.